The primary structure comprises 440 residues: C4-dicarboxylate transport protein (440 aa).

Helical transmembrane passes span 8-28 (LYLQ…LFPA), 40-60 (FIKL…VTGI), 74-94 (LKGL…GLVV), 147-167 (GDIL…AALK), 187-207 (IVGF…AFTV), 221-241 (LIAC…GLVL), 288-308 (VVGL…SIYL), and 354-374 (AATL…LLGV). The tract at residues 419 to 440 (EEVEPANEPEPPAVPAGAGLHG) is disordered.

This sequence belongs to the dicarboxylate/amino acid:cation symporter (DAACS) (TC 2.A.23) family.

The protein resides in the cell inner membrane. Responsible for the transport of dicarboxylates such as succinate, fumarate, and malate from the periplasm across the membrane. The protein is C4-dicarboxylate transport protein of Anaeromyxobacter dehalogenans (strain 2CP-1 / ATCC BAA-258).